We begin with the raw amino-acid sequence, 259 residues long: Hemin import ATP-binding protein HmuV (259 aa).

In terms of domain architecture, ABC transporter spans 8–242 (ISANNISYRI…KMIENVYGHK (235 aa)). 40-47 (GPNGAGKS) provides a ligand contact to ATP.

This sequence belongs to the ABC transporter superfamily. Heme (hemin) importer (TC 3.A.1.14.5) family. As to quaternary structure, the complex is composed of two ATP-binding proteins (HmuV), two transmembrane proteins (HmuU) and a solute-binding protein (HmuT).

It is found in the cell inner membrane. In terms of biological role, part of the ABC transporter complex HmuTUV involved in hemin import. Responsible for energy coupling to the transport system. The protein is Hemin import ATP-binding protein HmuV of Aliivibrio fischeri (strain ATCC 700601 / ES114) (Vibrio fischeri).